We begin with the raw amino-acid sequence, 1486 residues long: Rap guanine nucleotide exchange factor 2 (1486 aa).

Disordered regions lie at residues 40-59 and 68-101; these read HVSSSHSGCSITSDSGSSSL and SEAGDMDLSGLPETAVDSEDDDDEEDIERASDPL. Over residues 83–94 the composition is skewed to acidic residues; the sequence is VDSEDDDDEEDI. 135–252 is a binding site for a nucleoside 3',5'-cyclic phosphate; that stretch reads AFANMTMSVR…QKVEEEGEIV (118 aa). Residues 267 to 380 enclose the N-terminal Ras-GEF domain; the sequence is KGHIVIKGTS…RLLNIACAAK (114 aa). Positions 385-468 constitute a PDZ domain; that stretch reads LMTLTKPARE…LSITVKTNLF (84 aa). S501 is modified (phosphoserine). The region spanning 606–692 is the Ras-associating domain; it reads PDQVLRVFKA…GRYYLKNNME (87 aa). T644 is modified (phosphothreonine). In terms of domain architecture, Ras-GEF spans 717–944; the sequence is STVEVATQLS…SQGSTNATVL (228 aa). Phosphoserine occurs at positions 806, 930, 933, and 1022. The tract at residues 1002–1049 is disordered; that stretch reads PATNTLPKNPTDKKPVKSETSPVAPRAGLQPKAQPQPQPPQPPHKLNQ. Residues 1035–1044 are compositionally biased toward pro residues; the sequence is QPQPQPPQPP. Residues S1077, S1086, S1092, S1113, S1117, S1156, and S1173 each carry the phosphoserine modification. Disordered stretches follow at residues 1090 to 1176, 1221 to 1254, 1303 to 1357, and 1391 to 1486; these read EGSL…SVSI, PSTEELSQDQGDRASLDAADSGRGSWTSCSSGSH, KYSR…DSSS, and GRYR…VSAV. Low complexity-rich tracts occupy residues 1105–1122 and 1138–1159; these read SNTSSQLSSPPTSPQSSP and SDSGHSEISSRSSIVSNSSFDS. Composition is skewed to polar residues over residues 1244 to 1254 and 1304 to 1328; these read GSWTSCSSGSH and YSRQSQSRESLDQAQSRASWASSTG. Residues 1475–1486 are compositionally biased toward acidic residues; that stretch reads AEEDEDEQVSAV.

It belongs to the RAPGEF2 family. In terms of assembly, found in a complex, at least composed of KIDINS220, MAGI2, NTRK1 and RAPGEF2; the complex is mainly formed at late endosomes in a neuronal growth factor (NGF)-dependent manner. Interacts (via C-terminal domain) with NEDD4 (via WW domains); this interaction leads to ubiquitination and degradation via the proteasome pathway in a cAMP-independent manner. Interacts with MAGI1 (via PDZ domain). Interacts with ADRB1 (via C-terminal PDZ motif); the interaction is direct. Interacts (via Ras-associating domain) with RAP1A (via GTP-bound active form). Interacts weakly with HRAS (via GDP- and GTP-bound forms). Interacts (via C-terminal domain) with MAGI2 (via PDZ and WW domains). Interacts with CDH1 and TJP1. Interacts with CTNNB1. Post-translationally, ubiquitinated by NEDD4, leading to proteasomal degradation. Phosphorylation by PLK2 promotes its activity.

It localises to the cytoplasm. The protein resides in the perinuclear region. It is found in the cell membrane. Its subcellular location is the late endosome. The protein localises to the cell junction. Its function is as follows. Functions as a guanine nucleotide exchange factor (GEF), which activates Rap and Ras family of small GTPases by exchanging bound GDP for free GTP in a cAMP-dependent manner. Serves as a link between cell surface receptors and Rap/Ras GTPases in intracellular signaling cascades. Also acts as an effector for Rap1 by direct association with Rap1-GTP thereby leading to the amplification of Rap1-mediated signaling. Shows weak activity on HRAS. It is controversial whether RAPGEF2 binds cAMP and cGMP or not. Its binding to ligand-activated beta-1 adrenergic receptor ADRB1 leads to the Ras activation through the G(s)-alpha signaling pathway. Involved in the cAMP-induced Ras and Erk1/2 signaling pathway that leads to sustained inhibition of long term melanogenesis by reducing dendrite extension and melanin synthesis. Also provides inhibitory signals for cell proliferation of melanoma cells and promotes their apoptosis in a cAMP-independent nanner. Regulates cAMP-induced neuritogenesis by mediating the Rap1/B-Raf/ERK signaling through a pathway that is independent on both PKA and RAPGEF3/RAPGEF4. Involved in neuron migration and in the formation of the major forebrain fiber connections forming the corpus callosum, the anterior commissure and the hippocampal commissure during brain development. Involved in neuronal growth factor (NGF)-induced sustained activation of Rap1 at late endosomes and in brain-derived neurotrophic factor (BDNF)-induced axon outgrowth of hippocampal neurons. Plays a role in the regulation of embryonic blood vessel formation and in the establishment of basal junction integrity and endothelial barrier function. May be involved in the regulation of the vascular endothelial growth factor receptor KDR and cadherin CDH5 expression at allantois endothelial cell-cell junctions. Binds to cAMP. This Bos taurus (Bovine) protein is Rap guanine nucleotide exchange factor 2 (RAPGEF2).